The following is a 131-amino-acid chain: Phosphoribosyl-AMP cyclohydrolase (131 aa).

Asp90 serves as a coordination point for Mg(2+). Zn(2+) is bound at residue Cys91. Mg(2+) is bound by residues Asp92 and Asp94. 2 residues coordinate Zn(2+): Cys107 and Cys114.

It belongs to the PRA-CH family. Homodimer. Mg(2+) is required as a cofactor. It depends on Zn(2+) as a cofactor.

It localises to the cytoplasm. It catalyses the reaction 1-(5-phospho-beta-D-ribosyl)-5'-AMP + H2O = 1-(5-phospho-beta-D-ribosyl)-5-[(5-phospho-beta-D-ribosylamino)methylideneamino]imidazole-4-carboxamide. Its pathway is amino-acid biosynthesis; L-histidine biosynthesis; L-histidine from 5-phospho-alpha-D-ribose 1-diphosphate: step 3/9. In terms of biological role, catalyzes the hydrolysis of the adenine ring of phosphoribosyl-AMP. This is Phosphoribosyl-AMP cyclohydrolase from Hyphomonas neptunium (strain ATCC 15444).